We begin with the raw amino-acid sequence, 725 residues long: A-type inclusion protein A25 (725 aa).

Coiled coils occupy residues Gly418–Lys521 and Glu547–Thr719. A run of 4 repeats spans residues Val609 to Glu635, Asp636 to Gly663, Asn664 to Glu687, and Ile699 to Ser725. Residues Val609–Glu718 are 4 X approximate tandem repeats.

This sequence belongs to the poxviridae A25 protein family. Interacts (via N-terminus) with protein A26.

The protein resides in the virion. Functionally, structural protein that forms a matrix surrounding the mature virion (MV) through interaction with protein A26. Presence of protein A25 in the virion structurally prevents direct virus-cell fusion mechanism. This chain is A-type inclusion protein A25, found in Vaccinia virus (strain Western Reserve) (VACV).